The sequence spans 187 residues: Putative carbonic anhydrase YtiB (187 aa).

Positions 38, 40, 96, and 99 each coordinate Zn(2+).

This sequence belongs to the beta-class carbonic anhydrase family. Zn(2+) is required as a cofactor.

The catalysed reaction is hydrogencarbonate + H(+) = CO2 + H2O. Reversible hydration of carbon dioxide. The protein is Putative carbonic anhydrase YtiB (ytiB) of Bacillus subtilis (strain 168).